A 449-amino-acid chain; its full sequence is Chromosomal replication initiator protein DnaA (449 aa).

The segment at 1-72 is domain I, interacts with DnaA modulators; sequence MPNLEELWAY…VEGVYEFAQL (72 aa). The domain II stretch occupies residues 72 to 109; it reads LEVDPVIMTKDELQPAPATDQRPAVEEDDQNLTFKAKT. The domain III, AAA+ region stretch occupies residues 110 to 326; that stretch reads HLNPKYTFDH…GALVRVQAFS (217 aa). Residues Gly-154, Gly-156, Lys-157, and Thr-158 each contribute to the ATP site. Positions 327–449 are domain IV, binds dsDNA; sequence TMKNEDITTS…ELRNILKNRG (123 aa).

Belongs to the DnaA family. In terms of assembly, oligomerizes as a right-handed, spiral filament on DNA at oriC.

It localises to the cytoplasm. Its function is as follows. Plays an essential role in the initiation and regulation of chromosomal replication. ATP-DnaA binds to the origin of replication (oriC) to initiate formation of the DNA replication initiation complex once per cell cycle. Binds the DnaA box (a 9 base pair repeat at the origin) and separates the double-stranded (ds)DNA. Forms a right-handed helical filament on oriC DNA; dsDNA binds to the exterior of the filament while single-stranded (ss)DNA is stabiized in the filament's interior. The ATP-DnaA-oriC complex binds and stabilizes one strand of the AT-rich DNA unwinding element (DUE), permitting loading of DNA polymerase. After initiation quickly degrades to an ADP-DnaA complex that is not apt for DNA replication. Binds acidic phospholipids. The sequence is that of Chromosomal replication initiator protein DnaA from Lacticaseibacillus paracasei (strain ATCC 334 / BCRC 17002 / CCUG 31169 / CIP 107868 / KCTC 3260 / NRRL B-441) (Lactobacillus paracasei).